The chain runs to 160 residues: Ribonuclease P protein component 2 (160 aa).

This sequence belongs to the eukaryotic/archaeal RNase P protein component 2 family. Consists of a catalytic RNA component and at least 4-5 protein subunits.

The protein resides in the cytoplasm. It carries out the reaction Endonucleolytic cleavage of RNA, removing 5'-extranucleotides from tRNA precursor.. Part of ribonuclease P, a protein complex that generates mature tRNA molecules by cleaving their 5'-ends. The sequence is that of Ribonuclease P protein component 2 from Methanosphaerula palustris (strain ATCC BAA-1556 / DSM 19958 / E1-9c).